The following is a 252-amino-acid chain: Triosephosphate isomerase (252 aa).

8–10 serves as a coordination point for substrate; that stretch reads NWK. Catalysis depends on His95, which acts as the Electrophile. The active-site Proton acceptor is Glu167. Residues Gly173, Ser212, and 233–234 each bind substrate; that span reads GG.

This sequence belongs to the triosephosphate isomerase family. In terms of assembly, homodimer.

It localises to the cytoplasm. It catalyses the reaction D-glyceraldehyde 3-phosphate = dihydroxyacetone phosphate. Its pathway is carbohydrate biosynthesis; gluconeogenesis. It functions in the pathway carbohydrate degradation; glycolysis; D-glyceraldehyde 3-phosphate from glycerone phosphate: step 1/1. Its function is as follows. Involved in the gluconeogenesis. Catalyzes stereospecifically the conversion of dihydroxyacetone phosphate (DHAP) to D-glyceraldehyde-3-phosphate (G3P). The sequence is that of Triosephosphate isomerase from Lawsonia intracellularis (strain PHE/MN1-00).